Here is a 338-residue protein sequence, read N- to C-terminus: Lumican (338 aa).

Residues 1 to 18 (MNVCAFSLALALVGSVSG) form the signal peptide. Glutamine 19 carries the pyrrolidone carboxylic acid modification. A sulfotyrosine mark is found at tyrosine 20, tyrosine 21, tyrosine 23, and tyrosine 30. The LRRNT domain maps to 28-66 (FMYGQISPNCAPECNCPHSYPTAMYCDDLKLKSVPMVPP). LRR repeat units lie at residues 67-88 (GIKYLYLRNNQIDHIDEKAFEN), 91-114 (DLQWLILDHNLLENSKIKGKVFSK), 117-137 (QLKKLHINYNNLTESVGPLPK), 138-159 (SLQDLQLTNNKISKLGSFDGLV), 160-181 (NLTFIYLQHNQLKEDAVSASLK), 185-205 (SLEYLDLSFNQMSKLPAGLPT), 206-227 (SLLTLYLDNNKISNIPDEYFKR), and 230-250 (GLQYLRLSHNELADSGVPGNS). The N-linked (GlcNAc...) (keratan sulfate) asparagine glycan is linked to asparagine 88. Asparagine 127 carries an N-linked (GlcNAc...) (keratan sulfate) asparagine glycan. Asparagine 160 carries an N-linked (GlcNAc...) (keratan sulfate) asparagine glycan. Asparagine 252 carries an N-linked (GlcNAc...) (keratan sulfate) asparagine glycan. 2 LRR repeats span residues 255-276 (SLLELDLSYNKLKSIPTVNENL) and 277-296 (ENYYLEVNELEKFDVKSFCK). Cysteine 295 and cysteine 328 are disulfide-bonded. Serine 304 bears the Phosphoserine mark. One copy of the LRR 11 repeat lies at 305–326 (KIKHLRLDGNPLTQSSLPPDMY).

Belongs to the small leucine-rich proteoglycan (SLRP) family. SLRP class II subfamily. In terms of assembly, binds to laminin. In terms of processing, contains keratan sulfate. Cys-37, Cys-41, Cys-43 and Cys-53 are involved in disulfide bonds. Cornea and other tissues.

The protein localises to the secreted. The protein resides in the extracellular space. It localises to the extracellular matrix. The sequence is that of Lumican (Lum) from Mus musculus (Mouse).